Consider the following 265-residue polypeptide: Interleukin-2 receptor subunit alpha (265 aa).

The N-terminal stretch at 1–21 is a signal peptide; that stretch reads MDSYLLMWGLLTLIMVPGCFA. Residues 22-84 form the Sushi 1 domain; that stretch reads ELCDDDPPEI…SWDNQCQCTS (63 aa). Residues 22–240 are Extracellular-facing; that stretch reads ELCDDDPPEI…ETFIFTTEYQ (219 aa). Intrachain disulfides connect C24–C67, C49–C80, and C51–C82. 2 N-linked (GlcNAc...) asparagine glycosylation sites follow: N70 and N89. The span at 87-98 shows a compositional bias: polar residues; sequence TRNTTKQVTPQP. A disordered region spans residues 87–123; the sequence is TRNTTKQVTPQPEEQKERKTTEMQSPMQPVDQASLPG. The Sushi 2 domain maps to 123 to 186; the sequence is GHCREPPPWE…WTQPQLICTG (64 aa). Intrachain disulfides connect C125/C168 and C152/C184. The segment at 190-210 is disordered; sequence TSQFPGEEKPQASPEGRPESE. A compositionally biased stretch (basic and acidic residues) spans 195–209; the sequence is GEEKPQASPEGRPES. The chain crosses the membrane as a helical span at residues 241–259; that stretch reads VAVAGCVFLLISVLLLSGL. The Cytoplasmic portion of the chain corresponds to 260–265; the sequence is TWQRRQ.

As to quaternary structure, non-covalent dimer of an alpha and a beta subunit. IL2R exists in 3 different forms: a high affinity dimer, an intermediate affinity monomer (beta subunit), and a low affinity monomer (alpha subunit). The high and intermediate affinity forms also associate with a gamma subunit.

It localises to the membrane. Functionally, receptor for interleukin-2. The receptor is involved in the regulation of immune tolerance by controlling regulatory T cells (TREGs) activity. TREGs suppress the activation and expansion of autoreactive T-cells. This chain is Interleukin-2 receptor subunit alpha (IL2RA), found in Pan troglodytes (Chimpanzee).